The sequence spans 1215 residues: DNA-directed RNA polymerase subunit beta' (1215 aa).

Zn(2+) contacts are provided by Cys60, Cys62, Cys75, and Cys78. 3 residues coordinate Mg(2+): Asp450, Asp452, and Asp454. Zn(2+) contacts are provided by Cys819, Cys893, Cys900, and Cys903.

The protein belongs to the RNA polymerase beta' chain family. In terms of assembly, the RNAP catalytic core consists of 2 alpha, 1 beta, 1 beta' and 1 omega subunit. When a sigma factor is associated with the core the holoenzyme is formed, which can initiate transcription. It depends on Mg(2+) as a cofactor. The cofactor is Zn(2+).

It catalyses the reaction RNA(n) + a ribonucleoside 5'-triphosphate = RNA(n+1) + diphosphate. In terms of biological role, DNA-dependent RNA polymerase catalyzes the transcription of DNA into RNA using the four ribonucleoside triphosphates as substrates. The chain is DNA-directed RNA polymerase subunit beta' from Levilactobacillus brevis (strain ATCC 367 / BCRC 12310 / CIP 105137 / JCM 1170 / LMG 11437 / NCIMB 947 / NCTC 947) (Lactobacillus brevis).